Consider the following 320-residue polypeptide: Ferrochelatase (320 aa).

Residues His194 and Glu275 each contribute to the Fe cation site.

Belongs to the ferrochelatase family.

The protein resides in the cytoplasm. It catalyses the reaction heme b + 2 H(+) = protoporphyrin IX + Fe(2+). It participates in porphyrin-containing compound metabolism; protoheme biosynthesis; protoheme from protoporphyrin-IX: step 1/1. Catalyzes the ferrous insertion into protoporphyrin IX. The protein is Ferrochelatase of Stenotrophomonas maltophilia (strain R551-3).